Here is a 119-residue protein sequence, read N- to C-terminus: Large ribosomal subunit protein bL20 (119 aa).

Belongs to the bacterial ribosomal protein bL20 family.

Binds directly to 23S ribosomal RNA and is necessary for the in vitro assembly process of the 50S ribosomal subunit. It is not involved in the protein synthesizing functions of that subunit. This chain is Large ribosomal subunit protein bL20, found in Acinetobacter baumannii (strain SDF).